A 444-amino-acid polypeptide reads, in one-letter code: MRLSRYFLPVLKETPSDAEIVSHQLMLRAGMIKQEAAGIYAWLPLGHRVLRKIEQIVREEQDRAGAVELLMPTIQSADLWRESGRYDDYGDEMLRITDRHDRDMLFGPTNEEMITDIFRSYCKSYKDVPKLLYHIQWKFRDERRPRFGVMRGREFLMKDAYSFDVDEAAARRSYNRMFVAYLNTFARLGLKAVPMQADTGPIGGDLSHEFIVLAETGESEVFCHADLVEMGAPGLDVDFDGDLQPLVDQRTALYAATEEMHQPEEFAAVPADRQLSARGIEVGHIFNFGTKYSEPMKATVQHQDGQPRPVHMGSYGVGVSRLLGAIIEAHHDEKGCIWPESVAPFGAGIINMRVGDEACDAACETAYQGLVKAGLDPLYDDTDSRAGAKFATADLIGLPYQLVVGPRGLKEGKIELKVRRTGETHEMSPEDAVSRLAEGAFSDV.

Belongs to the class-II aminoacyl-tRNA synthetase family. ProS type 2 subfamily. Homodimer.

Its subcellular location is the cytoplasm. It carries out the reaction tRNA(Pro) + L-proline + ATP = L-prolyl-tRNA(Pro) + AMP + diphosphate. Its function is as follows. Catalyzes the attachment of proline to tRNA(Pro) in a two-step reaction: proline is first activated by ATP to form Pro-AMP and then transferred to the acceptor end of tRNA(Pro). The protein is Proline--tRNA ligase of Maricaulis maris (strain MCS10) (Caulobacter maris).